Reading from the N-terminus, the 576-residue chain is Probable lysosomal cobalamin transporter (576 aa).

Transmembrane regions (helical) follow at residues 8 to 28 (LIWAVYAIVVAVLVMVASVFI), 40 to 60 (VVTFTCIVAITSLLATVLLLP), 98 to 118 (YLLYSLDAFLCLLAIPFVYFW), 145 to 165 (TISFIAIVVVLFIVGFLVPVA), 188 to 208 (VLTFTLGLLITMGLFLYILYT), 312 to 332 (LLGGIAILLITLMIWISMLLT), 347 to 367 (GYILSGIGVFNPINWIFVQSA), 377 to 397 (LTVVVLLLFGSSVVGISTIGI), 419 to 439 (LTTAMLMLTILALDYSIPMLV), and 503 to 523 (FFGTVFFWSQFIFLVIYLLVL). Residues 549 to 576 (RLLTSSARGVGDTYQSVGGRNNFSTRAG) form a disordered region. Positions 561 to 576 (TYQSVGGRNNFSTRAG) are enriched in polar residues. Residue Asn570 is glycosylated (N-linked (GlcNAc...) asparagine).

It belongs to the LIMR family. LMBRD1 subfamily.

The protein resides in the lysosome membrane. In terms of biological role, probable lysosomal cobalamin transporter. Required to export cobalamin from lysosomes allowing its conversion to cofactors. This is Probable lysosomal cobalamin transporter from Aspergillus niger (strain ATCC MYA-4892 / CBS 513.88 / FGSC A1513).